Reading from the N-terminus, the 611-residue chain is Angiotensin-converting enzyme (611 aa).

Positions methionine 1 to glycine 17 are cleaved as a signal peptide. The 589-residue stretch at threonine 19–lysine 607 folds into the Peptidase M2 domain. The N-linked (GlcNAc...) asparagine glycan is linked to asparagine 53. Cysteines 133 and 141 form a disulfide. An N-linked (GlcNAc...) asparagine glycan is attached at asparagine 196. The cysteines at positions 336 and 354 are disulfide-linked. Zn(2+) is bound at residue histidine 367. Residue glutamate 368 is the Proton acceptor of the active site. Histidine 371 and glutamate 395 together coordinate Zn(2+). Histidine 497 (proton donor) is an active-site residue. Cysteine 522 and cysteine 540 form a disulfide bridge. The N-linked (GlcNAc...) asparagine glycan is linked to asparagine 531.

The protein belongs to the peptidase M2 family. It depends on Zn(2+) as a cofactor. In terms of tissue distribution, expressed in the compound ganglion and in the posterior region of the midgut.

Its subcellular location is the secreted. It is found in the extracellular space. The enzyme catalyses Release of a C-terminal dipeptide, oligopeptide-|-Xaa-Yaa, when Xaa is not Pro, and Yaa is neither Asp nor Glu. Thus, conversion of angiotensin I to angiotensin II, with increase in vasoconstrictor activity, but no action on angiotensin II.. In terms of biological role, involved in the specific maturation or degradation of a number of bioactive peptides. This is Angiotensin-converting enzyme (ACE) from Haematobia irritans exigua (Buffalo fly).